Here is a 334-residue protein sequence, read N- to C-terminus: Beta-1,3-N-acetylglucosaminyltransferase radical fringe (334 aa).

Topologically, residues 1–6 are cytoplasmic; it reads MSRVRR. Residues 7–29 form a helical; Signal-anchor for type II membrane protein membrane-spanning segment; that stretch reads VLCRACLALAAVLAVLLLLPLPL. Topologically, residues 30–334 are lumenal; the sequence is PLPLPLPRAP…MKNRGKEAFQ (305 aa). Arg77 is a substrate binding site. The N-linked (GlcNAc...) asparagine glycan is linked to Asn116. Disulfide bonds link Cys117–Cys128 and Cys146–Cys210. Asp150 is a substrate binding site. A Mn(2+)-binding site is contributed by Asp151. Residue Asp240 is part of the active site. His264 contributes to the Mn(2+) binding site. A disulfide bridge links Cys314 with Cys323.

Belongs to the glycosyltransferase 31 family. Mn(2+) is required as a cofactor. In terms of tissue distribution, most abundantly expressed in adult brain. Expressed in most neurons of the brain but not in glial cells. Also detected to a lower extent in adult lung and kidney.

Its subcellular location is the golgi apparatus membrane. It catalyses the reaction 3-O-(alpha-L-fucosyl)-L-threonyl-[EGF-like domain protein] + UDP-N-acetyl-alpha-D-glucosamine = 3-O-(N-acetyl-beta-D-glucosaminyl-(1-&gt;3)-alpha-L-fucosyl)-L-threonyl-[EGF-like domain protein] + UDP + H(+). It carries out the reaction 3-O-(alpha-L-fucosyl)-L-seryl-[EGF-like domain protein] + UDP-N-acetyl-alpha-D-glucosamine = 3-O-(N-acetyl-beta-D-glucosaminyl-(1-&gt;3)-alpha-L-fucosyl)-L-seryl-[EGF-like domain protein] + UDP + H(+). In terms of biological role, glycosyltransferase that initiates the elongation of O-linked fucose residues attached to EGF-like repeats in the extracellular domain of Notch molecules. Modulates NOTCH1 activity by modifying O-fucose residues at specific EGF-like domains resulting in enhancement of NOTCH1 activation by DLL1 and JAG1. Inhibits Notch signaling in postmitotic neurons of the brain. It may play a role in adult brain and in neurogenesis. It may play a role in limb development. The chain is Beta-1,3-N-acetylglucosaminyltransferase radical fringe from Rattus norvegicus (Rat).